We begin with the raw amino-acid sequence, 329 residues long: Ribosomal protein L11 methyltransferase (329 aa).

Residues Thr177, Gly198, Asp220, and Asn264 each coordinate S-adenosyl-L-methionine.

The protein belongs to the methyltransferase superfamily. PrmA family.

The protein localises to the cytoplasm. The catalysed reaction is L-lysyl-[protein] + 3 S-adenosyl-L-methionine = N(6),N(6),N(6)-trimethyl-L-lysyl-[protein] + 3 S-adenosyl-L-homocysteine + 3 H(+). Functionally, methylates ribosomal protein L11. This Helicobacter pylori (strain Shi470) protein is Ribosomal protein L11 methyltransferase.